A 249-amino-acid polypeptide reads, in one-letter code: Seipin homolog (249 aa).

Residues 1-10 are Cytoplasmic-facing; that stretch reads MGYLVKLFKL. The helical transmembrane segment at 11–31 threads the bilayer; sequence VVWMLVIGLFSIPSLVSYVIF. The Lumenal portion of the chain corresponds to 32 to 212; it reads YDTVIPHSVI…GMRWFMYTHK (181 aa). A helical membrane pass occupies residues 213–233; sequence VSAFLVFTSLFWFTGITSTII. Residues 234-249 are Cytoplasmic-facing; the sequence is TYLIVSSTSETKATRR.

The protein belongs to the seipin family.

The protein localises to the endoplasmic reticulum membrane. In terms of biological role, involved in lipid metabolism and lipid droplet (LD) morphology, number, and size. Facilitates initiation of LD formation, and ensures that vectorial budding of LDs from the ER is directed towards the cytoplasm. In Schizosaccharomyces pombe (strain 972 / ATCC 24843) (Fission yeast), this protein is Seipin homolog.